Here is a 129-residue protein sequence, read N- to C-terminus: Glycine cleavage system H protein (129 aa).

The 83-residue stretch at L24–R106 folds into the Lipoyl-binding domain. An N6-lipoyllysine modification is found at K65.

Belongs to the GcvH family. In terms of assembly, the glycine cleavage system is composed of four proteins: P, T, L and H. (R)-lipoate serves as cofactor.

In terms of biological role, the glycine cleavage system catalyzes the degradation of glycine. The H protein shuttles the methylamine group of glycine from the P protein to the T protein. This is Glycine cleavage system H protein from Synechococcus sp. (strain CC9605).